We begin with the raw amino-acid sequence, 543 residues long: Oxalate--CoA ligase (543 aa).

Position 196–207 (196–207) interacts with ATP; that stretch reads HTSGTTSTPKTV. The short motif at 410–458 is the FACS element; the sequence is ENYFRTGDQGYFDPEGFLVLTGRIKELINRGGEKISPIELDGIMLSHPK. A C-terminal peroxisome targeting signal (PTS1) motif is present at residues 541-543; sequence SKL.

It belongs to the ATP-dependent AMP-binding enzyme family. In terms of assembly, interacts with PEX5.

It localises to the peroxisome matrix. The protein localises to the peroxisome membrane. The enzyme catalyses oxalate + ATP + CoA = oxalyl-CoA + AMP + diphosphate. Its function is as follows. Catalyzes the first step in a degradation pathway of oxalate to CO(2) to protect the cell against the harmful effects of oxalate derived from endogenous processes or an environmental sources. The chain is Oxalate--CoA ligase from Saccharomyces cerevisiae (strain ATCC 204508 / S288c) (Baker's yeast).